Consider the following 365-residue polypeptide: Protein RecA (365 aa).

Residue 73-80 (GPESSGKT) coordinates ATP.

The protein belongs to the RecA family.

It localises to the cytoplasm. Functionally, can catalyze the hydrolysis of ATP in the presence of single-stranded DNA, the ATP-dependent uptake of single-stranded DNA by duplex DNA, and the ATP-dependent hybridization of homologous single-stranded DNAs. It interacts with LexA causing its activation and leading to its autocatalytic cleavage. The chain is Protein RecA from Prochlorococcus marinus (strain MIT 9215).